The following is a 507-amino-acid chain: Protein DETOXIFICATION 39 (507 aa).

Transmembrane regions (helical) follow at residues 58 to 78, 92 to 112, 141 to 161, 178 to 198, 209 to 229, 233 to 253, 287 to 307, 318 to 338, 359 to 379, 403 to 423, 433 to 453, and 459 to 479; these read VLFRLALPAILIYLVNSGMGI, LAAASIGNSCFNLVYGLMLGM, IVLALVGLPMTLLYTFSYPIL, IAGLIPQIFAYAVNFTAQKFL, FISAAALILQILLTWITVYVM, FMGIAYVLTISWWVIVGSQCF, AVMICLEMWYSQILVLLAGLL, SICMSISALSFMVSVGFNAAV, WTATFVSFVISVTEALAVIWF, FLAITIILNGIQPVLSGVAVG, VNVGCYYVVGIPVGCILGFTF, and GIWTGMIGGTLMQTLILLYVT.

It belongs to the multi antimicrobial extrusion (MATE) (TC 2.A.66.1) family.

Its subcellular location is the membrane. This is Protein DETOXIFICATION 39 from Arabidopsis thaliana (Mouse-ear cress).